Consider the following 45-residue polypeptide: Large ribosomal subunit protein bL34 (45 aa).

It belongs to the bacterial ribosomal protein bL34 family.

The chain is Large ribosomal subunit protein bL34 from Leifsonia xyli subsp. xyli (strain CTCB07).